The sequence spans 622 residues: MARMQGCSVLVLDDSDKLVNKYDHKVTVVCSYDPQGMAVRLLQEGATPPKQLEEYLVSGAGTTHLSRGHTSHMLVVGGELVLFRFASRGDCQQFRSLLHKLSGKVNSVFNLRTEDSSASQYFQFYGYLSQQQNMMQDFVRTSTYQRAIYNNAQDFQNKIVLDVGAGSGILSFFAVQAGAAKVYAVEASNMAQYAQQLVSSNNLTDRIIVIAGKIEEIDLPERVDVIISEPMGYMLYNERMLETYLHGKKWLKPDGKMYPSRGDLHVAPFTDEALYMEQYNKANFWMQTEFHGVNLVALRDAAMKEYFRQPIVDTFDIRICMAKSIRHTTNFLTADEKDLHRIQIDVEFHMLETGTCHGLAFWFDVEFAGTCSQIWLSTSPTEPLTHWYQVRCLLQTPIFVKQGQVLSGKVVLAANQRQSYDVEIDLKLEGTMISSSNTLDLKNPYFRYTGAPVAAPPGSNTTSPSEAFWSQLDAQGARNAVNLVNGITVNGLGEVDMSSTIINTNLMAIGGGANGGGPGGHQPNIHPGLISSTGRQQQQQQQQQQQQAAVGPQQQQQQQSTTAQQLAMTPPIGCAATSTQNVAQHQLIGGAISPSLFTSPAQPILNSHHHHPGQPIHGNQFY.

An SAM-dependent MTase PRMT-type domain is found at 118–425 (ASQYFQFYGY…QRQSYDVEID (308 aa)). Gln-131, Arg-140, Gly-164, Glu-186, Glu-215, and Thr-243 together coordinate S-adenosyl-L-methionine. Arg-478 is modified (asymmetric dimethylarginine; by autocatalysis). Disordered stretches follow at residues 513-556 (ANGG…QQQQ) and 602-622 (QPIL…NQFY). Residues 536 to 556 (QQQQQQQQQQQQAAVGPQQQQ) show a composition bias toward low complexity.

The protein belongs to the class I-like SAM-binding methyltransferase superfamily. Protein arginine N-methyltransferase family. As to quaternary structure, homodimer. The dimethylated protein is the major form.

It is found in the cytoplasm. It localises to the nucleus. It carries out the reaction L-arginyl-[protein] + 2 S-adenosyl-L-methionine = N(omega),N(omega)-dimethyl-L-arginyl-[protein] + 2 S-adenosyl-L-homocysteine + 2 H(+). Its function is as follows. Methylates (mono- and asymmetric dimethylation) the guanidino nitrogens of arginyl residues in proteins. May methylate histone H3 at 'Arg-17' and activate transcription via chromatin remodeling. This chain is Histone-arginine methyltransferase CARMER, found in Anopheles gambiae (African malaria mosquito).